Reading from the N-terminus, the 168-residue chain is Endoribonuclease YbeY (168 aa).

Zn(2+) is bound by residues His-126, His-130, and His-136.

This sequence belongs to the endoribonuclease YbeY family. Zn(2+) is required as a cofactor.

The protein localises to the cytoplasm. In terms of biological role, single strand-specific metallo-endoribonuclease involved in late-stage 70S ribosome quality control and in maturation of the 3' terminus of the 16S rRNA. The polypeptide is Endoribonuclease YbeY (Agrobacterium fabrum (strain C58 / ATCC 33970) (Agrobacterium tumefaciens (strain C58))).